A 240-amino-acid chain; its full sequence is Transmembrane emp24 domain-containing protein 6 (240 aa).

The N-terminal stretch at 1-21 is a signal peptide; that stretch reads MSPLLFGAGLVVLNLVTSARS. Residues 22 to 200 are Lumenal-facing; that stretch reads QKTEPLSGSG…FFLIQSNYNY (179 aa). A GOLD domain is found at 53–138; sequence TECFWQFAHQ…SVQVYLNFGV (86 aa). Residues asparagine 107 and asparagine 156 are each glycosylated (N-linked (GlcNAc...) asparagine). Residues 201–223 form a helical membrane-spanning segment; that stretch reads VNWWSTAQSLVIILSGILQLYFL. Residues 224–240 are Cytoplasmic-facing; it reads KRLFNVPTTTDTKKPRC.

Belongs to the EMP24/GP25L family.

Its subcellular location is the endoplasmic reticulum membrane. In Homo sapiens (Human), this protein is Transmembrane emp24 domain-containing protein 6 (TMED6).